Reading from the N-terminus, the 413-residue chain is Serine hydroxymethyltransferase (413 aa).

(6S)-5,6,7,8-tetrahydrofolate contacts are provided by residues Leu-119 and 123–125; that span reads GHL. The residue at position 228 (Lys-228) is an N6-(pyridoxal phosphate)lysine. Position 351–353 (351–353) interacts with (6S)-5,6,7,8-tetrahydrofolate; that stretch reads SPF.

Belongs to the SHMT family. Homodimer. Requires pyridoxal 5'-phosphate as cofactor.

Its subcellular location is the cytoplasm. It carries out the reaction (6R)-5,10-methylene-5,6,7,8-tetrahydrofolate + glycine + H2O = (6S)-5,6,7,8-tetrahydrofolate + L-serine. It participates in one-carbon metabolism; tetrahydrofolate interconversion. Its pathway is amino-acid biosynthesis; glycine biosynthesis; glycine from L-serine: step 1/1. In terms of biological role, catalyzes the reversible interconversion of serine and glycine with tetrahydrofolate (THF) serving as the one-carbon carrier. This reaction serves as the major source of one-carbon groups required for the biosynthesis of purines, thymidylate, methionine, and other important biomolecules. Also exhibits THF-independent aldolase activity toward beta-hydroxyamino acids, producing glycine and aldehydes, via a retro-aldol mechanism. This is Serine hydroxymethyltransferase from Clostridium botulinum (strain Langeland / NCTC 10281 / Type F).